The sequence spans 78 residues: Cell division topological specificity factor (78 aa).

This sequence belongs to the MinE family.

In terms of biological role, prevents the cell division inhibition by proteins MinC and MinD at internal division sites while permitting inhibition at polar sites. This ensures cell division at the proper site by restricting the formation of a division septum at the midpoint of the long axis of the cell. This chain is Cell division topological specificity factor, found in Helicobacter hepaticus (strain ATCC 51449 / 3B1).